We begin with the raw amino-acid sequence, 397 residues long: Dual oxidase maturation factor 1 (397 aa).

The next 2 helical transmembrane spans lie at phenylalanine 26–valine 46 and tyrosine 57–alanine 77. Asparagine 109 carries an N-linked (GlcNAc...) asparagine glycan. A run of 3 helical transmembrane segments spans residues alanine 191 to proline 211, isoleucine 218 to cysteine 238, and cysteine 261 to isoleucine 281. Residues tyrosine 324–aspartate 376 form a disordered region. 2 N-linked (GlcNAc...) asparagine glycosylation sites follow: asparagine 327 and asparagine 330. Over residues aspartate 341–glutamine 350 the composition is skewed to polar residues. Over residues serine 351–serine 370 the composition is skewed to low complexity.

It belongs to the DUOXA family. In terms of assembly, interacts with bli-3 and tsp-15. Interacts with csnk-1. As to expression, expressed in the hypodermis, specifically in seam cells, the terminal bulb of the pharynx, the distal region of the gonadal arm, vulva, spermatheca and uterus.

The protein resides in the membrane. Its function is as follows. Plays a role in cuticle biogenesis. In complex with tsp-15 and the dual oxidase bli-3, promotes the generation of reactive oxygen species (ROS) and tyrosine cross-linking of collagen, thus stabilizing cuticular extracellular matrix. This chain is Dual oxidase maturation factor 1, found in Caenorhabditis elegans.